Consider the following 113-residue polypeptide: Putative membrane protein insertion efficiency factor (113 aa).

This sequence belongs to the UPF0161 family.

The protein resides in the cell inner membrane. Could be involved in insertion of integral membrane proteins into the membrane. The protein is Putative membrane protein insertion efficiency factor of Campylobacter jejuni subsp. doylei (strain ATCC BAA-1458 / RM4099 / 269.97).